A 373-amino-acid chain; its full sequence is MKSPAVPALDLPAEGETGVVDIGPLTLESGAVIDDVSIAVQRWGELSPNRDNVVMVLHALTGDSHVTGPAGPDHPTPGWWDGVAGPGAPIDTDRWCAVSTNVLGGCRGSTGPSSIAPDGRPYGSRFPAVTIRDQVTADLAALEALGITEVAAVVGGSMGGARALEWIVGHPATVRSALILAVGARATADQIGTQSTQVAAIKADPDWCGGDYHDTGRVPSTGLAIARRFAHLTYRGEVELDDRFGNHAQGDESPTDGGRYAVQSYLEYQGAKLVERFDAGTYVTLTDALSSHDVGRGRGGVRAALQGCRVPTIVGGVTSDRLYPLRLQQELAELLPGCTGLDVVDSVYGHDGFLVETEAVGKLIRRTLELAER.

Residues 52–356 (NVVMVLHALT…VYGHDGFLVE (305 aa)) form the AB hydrolase-1 domain. The active-site Nucleophile is the serine 157. Arginine 227 provides a ligand contact to substrate. Catalysis depends on residues aspartate 320 and histidine 350. A substrate-binding site is contributed by aspartate 351.

This sequence belongs to the AB hydrolase superfamily. MetX family. Homodimer.

Its subcellular location is the cytoplasm. It carries out the reaction L-homoserine + acetyl-CoA = O-acetyl-L-homoserine + CoA. The protein operates within amino-acid biosynthesis; L-methionine biosynthesis via de novo pathway; O-acetyl-L-homoserine from L-homoserine: step 1/1. Its function is as follows. Transfers an acetyl group from acetyl-CoA to L-homoserine, forming acetyl-L-homoserine. This is Homoserine O-acetyltransferase from Mycobacterium sp. (strain KMS).